Reading from the N-terminus, the 160-residue chain is RxLR effector protein PexRD44 (160 aa).

The first 21 residues, 1-21 (MRLLLWVLISMLSIALSSCAA), serve as a signal peptide directing secretion. A RxLR-dEER motif is present at residues 54–76 (RFLRGESSKIVNLKQEEGVFEER).

The protein belongs to the RxLR effector family.

The protein resides in the secreted. The protein localises to the host cell membrane. It localises to the host nucleus. Its subcellular location is the host nucleolus. In terms of biological role, effector that is involved in host plant infection. Contributes to virulence during the early infection stage, by inhibiting plant defense responses induced by both PAMP-triggered immunity (PTI) and effector-triggered immunity (ETI). The protein is RxLR effector protein PexRD44 of Phytophthora infestans (strain T30-4) (Potato late blight agent).